Consider the following 200-residue polypeptide: 6-carboxy-5,6,7,8-tetrahydropterin synthase (200 aa).

Residue histidine 13 participates in Zn(2+) binding. Catalysis depends on cysteine 23, which acts as the Proton acceptor. Positions 28 and 30 each coordinate Zn(2+). Active-site charge relay system residues include histidine 68 and glutamate 136.

This sequence belongs to the PTPS family. QueD subfamily. Zn(2+) is required as a cofactor.

The catalysed reaction is 7,8-dihydroneopterin 3'-triphosphate + H2O = 6-carboxy-5,6,7,8-tetrahydropterin + triphosphate + acetaldehyde + 2 H(+). It participates in purine metabolism; 7-cyano-7-deazaguanine biosynthesis. Its function is as follows. Catalyzes the conversion of 7,8-dihydroneopterin triphosphate (H2NTP) to 6-carboxy-5,6,7,8-tetrahydropterin (CPH4) and acetaldehyde. This is 6-carboxy-5,6,7,8-tetrahydropterin synthase (queD) from Helicobacter pylori (strain ATCC 700392 / 26695) (Campylobacter pylori).